A 389-amino-acid polypeptide reads, in one-letter code: S-adenosylmethionine synthase (389 aa).

Histidine 15 serves as a coordination point for ATP. Aspartate 17 contacts Mg(2+). Glutamate 43 is a binding site for K(+). Residues glutamate 56 and glutamine 99 each coordinate L-methionine. The interval 99–109 (QSPDIAQGVNE) is flexible loop. ATP contacts are provided by residues 166-168 (DAK), 234-235 (RF), aspartate 243, 249-250 (RK), alanine 266, and lysine 270. L-methionine is bound at residue aspartate 243. Lysine 274 lines the L-methionine pocket.

The protein belongs to the AdoMet synthase family. As to quaternary structure, homotetramer; dimer of dimers. The cofactor is Mg(2+). K(+) is required as a cofactor.

Its subcellular location is the cytoplasm. It catalyses the reaction L-methionine + ATP + H2O = S-adenosyl-L-methionine + phosphate + diphosphate. It participates in amino-acid biosynthesis; S-adenosyl-L-methionine biosynthesis; S-adenosyl-L-methionine from L-methionine: step 1/1. In terms of biological role, catalyzes the formation of S-adenosylmethionine (AdoMet) from methionine and ATP. The overall synthetic reaction is composed of two sequential steps, AdoMet formation and the subsequent tripolyphosphate hydrolysis which occurs prior to release of AdoMet from the enzyme. The sequence is that of S-adenosylmethionine synthase from Neisseria gonorrhoeae (strain NCCP11945).